We begin with the raw amino-acid sequence, 488 residues long: Proline--tRNA ligase (488 aa).

The protein belongs to the class-II aminoacyl-tRNA synthetase family. ProS type 3 subfamily. As to quaternary structure, homodimer.

It localises to the cytoplasm. The enzyme catalyses tRNA(Pro) + L-proline + ATP = L-prolyl-tRNA(Pro) + AMP + diphosphate. Its function is as follows. Catalyzes the attachment of proline to tRNA(Pro) in a two-step reaction: proline is first activated by ATP to form Pro-AMP and then transferred to the acceptor end of tRNA(Pro). The chain is Proline--tRNA ligase from Borreliella burgdorferi (strain ZS7) (Borrelia burgdorferi).